A 214-amino-acid polypeptide reads, in one-letter code: Glycerol-3-phosphate acyltransferase (214 aa).

5 consecutive transmembrane segments (helical) span residues 4-24 (LIVAVVAYLIGSVSFAVIVSA), 52-72 (AAILTLIGDAFKGWLPVWFVV), 82-102 (DTSVAIAAVAVFLGHLYPAFF), 118-138 (LAINPILGVATLLTWLIVAFF), and 159-179 (FLFGPHIIALAIVVMSSLLVW).

This sequence belongs to the PlsY family. In terms of assembly, probably interacts with PlsX.

It localises to the cell inner membrane. The enzyme catalyses an acyl phosphate + sn-glycerol 3-phosphate = a 1-acyl-sn-glycero-3-phosphate + phosphate. The protein operates within lipid metabolism; phospholipid metabolism. In terms of biological role, catalyzes the transfer of an acyl group from acyl-phosphate (acyl-PO(4)) to glycerol-3-phosphate (G3P) to form lysophosphatidic acid (LPA). This enzyme utilizes acyl-phosphate as fatty acyl donor, but not acyl-CoA or acyl-ACP. The protein is Glycerol-3-phosphate acyltransferase of Paraburkholderia xenovorans (strain LB400).